Consider the following 803-residue polypeptide: Translation initiation factor IF-2 (803 aa).

The segment covering 65–75 has biased composition (basic and acidic residues); sequence PDKVEEKKEHT. The tract at residues 65–186 is disordered; it reads PDKVEEKKEH…PKSRKSKTLK (122 aa). Residues 175–185 show a composition bias toward basic residues; that stretch reads NKPKSRKSKTL. The tr-type G domain maps to 300 to 468; the sequence is IRPPVVTIMG…ILLTADAALE (169 aa). The interval 309 to 316 is G1; it reads GHVDHGKT. GTP is bound at residue 309 to 316; it reads GHVDHGKT. The G2 stretch occupies residues 334–338; sequence GITQH. Positions 355–358 are G3; that stretch reads DTPG. GTP is bound by residues 355-359 and 409-412; these read DTPGH and NKID. The tract at residues 409-412 is G4; sequence NKID. Residues 445 to 447 form a G5 region; the sequence is SAK.

It belongs to the TRAFAC class translation factor GTPase superfamily. Classic translation factor GTPase family. IF-2 subfamily.

It is found in the cytoplasm. In terms of biological role, one of the essential components for the initiation of protein synthesis. Protects formylmethionyl-tRNA from spontaneous hydrolysis and promotes its binding to the 30S ribosomal subunits. Also involved in the hydrolysis of GTP during the formation of the 70S ribosomal complex. This Tropheryma whipplei (strain TW08/27) (Whipple's bacillus) protein is Translation initiation factor IF-2.